Consider the following 48-residue polypeptide: Large ribosomal subunit protein bL33 (48 aa).

It belongs to the bacterial ribosomal protein bL33 family.

The chain is Large ribosomal subunit protein bL33 from Streptococcus mutans serotype c (strain ATCC 700610 / UA159).